Here is a 445-residue protein sequence, read N- to C-terminus: von Willebrand factor A domain-containing protein 1 (445 aa).

An N-terminal signal peptide occupies residues 1–22; that stretch reads MLPWTALGLALSLRLALARSGA. In terms of domain architecture, VWFA spans 34 to 213; that stretch reads DLMFLLDSSA…ELRGSILDAM (180 aa). Phosphoserine; by FAM20C occurs at positions 74 and 80. At Tyr-83 the chain carries Phosphotyrosine. Residue Ser-93 is modified to Phosphoserine; by FAM20C. The region spanning 214-304 is the Fibronectin type-III 1 domain; sequence RPQQLHATEI…QILRVRTRPG (91 aa). Asn-264 is a glycosylation site (N-linked (GlcNAc...) asparagine). Disordered stretches follow at residues 302 to 325 and 411 to 445; these read RPGE…TQLA and RESA…SREP. The span at 311 to 325 shows a compositional bias: low complexity; it reads SGPESGAGPAPTQLA. One can recognise a Fibronectin type-III 2 domain in the interval 334 to 427; that stretch reads GPERIVISHA…KACTPDGPRP (94 aa).

As to quaternary structure, homodimer or homomultimer; disulfide-linked. Interacts with HSPG2. N-glycosylated.

The protein resides in the secreted. Its subcellular location is the extracellular space. The protein localises to the extracellular matrix. It localises to the basement membrane. Promotes matrix assembly. Involved in the organization of skeletal muscles and in the formation of neuromuscular junctions. The chain is von Willebrand factor A domain-containing protein 1 from Homo sapiens (Human).